The chain runs to 293 residues: Protease HtpX (293 aa).

Helical transmembrane passes span 4-24 (IALF…VLSL) and 34-54 (GLLI…LLMS). His139 lines the Zn(2+) pocket. Glu140 is an active-site residue. His143 contacts Zn(2+). The next 2 membrane-spanning stretches (helical) occupy residues 158–178 (VVNT…AGFM) and 193–213 (LIYF…ASII). Glu222 contacts Zn(2+).

Belongs to the peptidase M48B family. Zn(2+) serves as cofactor.

The protein localises to the cell inner membrane. The protein is Protease HtpX of Enterobacter sp. (strain 638).